The following is a 174-amino-acid chain: Large ribosomal subunit protein uL10 (174 aa).

The protein belongs to the universal ribosomal protein uL10 family. As to quaternary structure, part of the ribosomal stalk of the 50S ribosomal subunit. The N-terminus interacts with L11 and the large rRNA to form the base of the stalk. The C-terminus forms an elongated spine to which L12 dimers bind in a sequential fashion forming a multimeric L10(L12)X complex.

Functionally, forms part of the ribosomal stalk, playing a central role in the interaction of the ribosome with GTP-bound translation factors. The protein is Large ribosomal subunit protein uL10 of Anaeromyxobacter dehalogenans (strain 2CP-C).